The primary structure comprises 265 residues: Phosphate import ATP-binding protein PstB 2 (265 aa).

Residues 13 to 260 form the ABC transporter domain; sequence FRTENLNVYY…PTKQATRDYV (248 aa). 45-52 is an ATP binding site; the sequence is GPSGCGKS.

This sequence belongs to the ABC transporter superfamily. Phosphate importer (TC 3.A.1.7) family. The complex is composed of two ATP-binding proteins (PstB), two transmembrane proteins (PstC and PstA) and a solute-binding protein (PstS).

The protein resides in the cell inner membrane. The enzyme catalyses phosphate(out) + ATP + H2O = ADP + 2 phosphate(in) + H(+). Its function is as follows. Part of the ABC transporter complex PstSACB involved in phosphate import. Responsible for energy coupling to the transport system. The chain is Phosphate import ATP-binding protein PstB 2 from Synechococcus sp. (strain JA-2-3B'a(2-13)) (Cyanobacteria bacterium Yellowstone B-Prime).